A 699-amino-acid polypeptide reads, in one-letter code: UV radiation resistance-associated gene protein (699 aa).

The span at 1 to 10 (MSASASVGGP) shows a compositional bias: low complexity. Residues 1 to 24 (MSASASVGGPVPQPPPGPAAALPP) form a disordered region. Residues 23-149 (PPGSAARALH…YLGQQIHARN (127 aa)) form the C2 domain. The sufficient for interaction with STX7; VTI1B AND STX8 stretch occupies residues 200-269 (HRAQCAIKQT…REVALLHKQQ (70 aa)). A coiled-coil region spans residues 224–305 (LRLTSTSNEL…LRKECTAKRE (82 aa)). The sufficient for interaction with VPS16, required for interaction with CEP63 stretch occupies residues 270-442 (IALQDKGSAF…IAQLRYQHGL (173 aa)). The segment at 443–699 (GTPDLRQTLP…FRRPRRSSDK (257 aa)) is required for interaction with PRKDC, XRCC6 and XRCC5. Residues 486 to 591 (GGADVGFSGG…SQEQGEALSG (106 aa)) form a disordered region. Ser493 bears the Phosphoserine mark. The residue at position 498 (Ser498) is a Phosphoserine; by MTOR. Ser508 carries the post-translational modification Phosphoserine. A Phosphothreonine modification is found at Thr518. A Phosphoserine modification is found at Ser522. The span at 523–535 (YNSALAQPVTTVP) shows a compositional bias: polar residues. Residues 545 to 556 (TSLSSSLDTSLD) are compositionally biased toward low complexity. 2 positions are modified to phosphoserine: Ser549 and Ser550. Positions 557–567 (FSKENKKKGED) are enriched in basic and acidic residues. Residues Ser571, Ser582, and Ser689 each carry the phosphoserine modification.

In terms of assembly, component of the PI3K (PI3KC3/PI3K-III/class III phosphatidylinositol 3-kinase) complex II (PI3KC3-C2) in which the core composed of the catalytic subunit PIK3C3, the regulatory subunit PIK3R4 and BECN1 is associated with UVRAG; in the complex interacts directly with BECN1. PI3KC3-C2 can associate with further regulatory subunits such as RUBCN and probably SH3GLB1/Bif-1. Interacts with SH3GLB1; UVRAG bridges the interaction to BECN1 indicative for an association with the PI3K complex PI3KC3-C2. Interacts with RINT1. Associates with the NRZ complex under basal conditions and dissociates from it under autophagy conditions to associate with the PI3K complex; these complex associations seem to be mutually exclusive. Interacts with VPS16; VPS11; VPS18; VPS33 (VPS33A or VPS33B) and VPS39; indicative for an association with a class C Vps tethering complex (possibly the HOPS complex). Interacts with RAB7A; RAB7A competes with UVRAG for RUBCN binding. Interacts with STX7, VTI1B, STX8. Interacts with PRKDC, XRCC6 and XRCC5; indicative for an association with the DNA-dependent protein kinase complex DNA-PK. Interacts with CEP63. Directly interacts with FEZ1 and SCOC; the interaction with SCOC is reduced by amino acid starvation, but the complex is stabilized in the presence of FEZ1. Interacts with BECN1P1/BECN2. Interacts with SLAMF1. Interacts with RUBCNL/PACER; promoting targeting of UVRAG to autophagosome. Interacts with WNK1. Phosphorylated at Ser-498 by MTOR under basal conditions; increases the interaction with RUBCN implicated in inhibitory effect of RUBCN on PI3KC3 and decreases interaction with RAB7,A and VPS16 and VPS39 (indicative for a class C Vps complex, possibly the HOPS complex). As to expression, highly expressed in brain, lung, kidney and liver.

The protein localises to the late endosome. The protein resides in the lysosome. Its subcellular location is the cytoplasmic vesicle. It localises to the autophagosome. It is found in the early endosome. The protein localises to the endoplasmic reticulum. The protein resides in the midbody. Its subcellular location is the chromosome. It localises to the centromere. Versatile protein that is involved in regulation of different cellular pathways implicated in membrane trafficking. Involved in regulation of the COPI-dependent retrograde transport from Golgi and the endoplasmic reticulum by associating with the NRZ complex; the function is dependent on its binding to phosphatidylinositol 3-phosphate (PtdIns(3)P). During autophagy acts as a regulatory subunit of the alternative PI3K complex II (PI3KC3-C2) that mediates formation of phosphatidylinositol 3-phosphate and is believed to be involved in maturation of autophagosomes and endocytosis. Activates lipid kinase activity of PIK3C3. Involved in the regulation of degradative endocytic trafficking and cytokinesis, and in regulation of ATG9A transport from the Golgi to the autophagosome; the functions seems to implicate its association with PI3KC3-C2. Involved in maturation of autophagosomes and degradative endocytic trafficking independently of BECN1 but depending on its association with a class C Vps complex (possibly the HOPS complex); the association is also proposed to promote autophagosome recruitment and activation of Rab7 and endosome-endosome fusion events. Enhances class C Vps complex (possibly HOPS complex) association with a SNARE complex and promotes fusogenic SNARE complex formation during late endocytic membrane fusion. In case of negative-strand RNA virus infection is required for efficient virus entry, promotes endocytic transport of virions and is implicated in a VAMP8-specific fusogenic SNARE complex assembly. Functionally, involved in maintaining chromosomal stability. Promotes DNA double-strand break (DSB) repair by association with DNA-dependent protein kinase complex DNA-PK and activating it in non-homologous end joining (NHEJ). Required for centrosome stability and proper chromosome segregation. This chain is UV radiation resistance-associated gene protein (UVRAG), found in Homo sapiens (Human).